Here is a 128-residue protein sequence, read N- to C-terminus: Glycine cleavage system H protein 2 (128 aa).

One can recognise a Lipoyl-binding domain in the interval 24–105 (TVTVGISDHA…PYSAWIFKVK (82 aa)). An N6-lipoyllysine modification is found at lysine 65.

It belongs to the GcvH family. In terms of assembly, the glycine cleavage system is composed of four proteins: P, T, L and H. Requires (R)-lipoate as cofactor.

The glycine cleavage system catalyzes the degradation of glycine. The H protein shuttles the methylamine group of glycine from the P protein to the T protein. The polypeptide is Glycine cleavage system H protein 2 (Pseudomonas syringae pv. tomato (strain ATCC BAA-871 / DC3000)).